A 213-amino-acid chain; its full sequence is Large ribosomal subunit protein eL14 (213 aa).

Residue Lys-79 is modified to N6-acetyllysine. Residue Lys-85 is modified to N6-acetyllysine; alternate. Lys-85 is subject to N6-succinyllysine; alternate. A Glycyl lysine isopeptide (Lys-Gly) (interchain with G-Cter in SUMO2) cross-link involves residue Lys-124. Residue Ser-139 is modified to Phosphoserine. A disordered region spans residues 166–213; it reads TAGKKAPAQKAPAQKAAGQKAAPPPKAQKVQKPPAQKAPAPKASGEKA. The stretch at 169–173 is one 1-1; approximate repeat; sequence KKAPA. The 4 X 5 AA tandem repeats of Q-K-A-[APS]-X stretch occupies residues 169-188; it reads KKAPAQKAPAQKAAGQKAAP. 5 repeat units span residues 174–178, 179–183, 184–188, 191–193, and 194–196. Positions 191-196 are 2 X 3 AA tandem repeats of K-G-Q; sequence KAQKVQ. The residue at position 202 (Lys-202) is an N6-succinyllysine.

Belongs to the eukaryotic ribosomal protein eL14 family. As to quaternary structure, component of the large ribosomal subunit.

It localises to the cytoplasm. Functionally, component of the large ribosomal subunit. The ribosome is a large ribonucleoprotein complex responsible for the synthesis of proteins in the cell. The chain is Large ribosomal subunit protein eL14 (RPL14) from Sus scrofa (Pig).